The sequence spans 543 residues: Putative cysteine ligase BshC (543 aa).

Residues 419-440 (DEKNNDNIDEVVEEVKAQISDI) adopt a coiled-coil conformation.

It belongs to the BshC family.

Its function is as follows. Involved in bacillithiol (BSH) biosynthesis. May catalyze the last step of the pathway, the addition of cysteine to glucosamine malate (GlcN-Mal) to generate BSH. The protein is Putative cysteine ligase BshC of Oceanobacillus iheyensis (strain DSM 14371 / CIP 107618 / JCM 11309 / KCTC 3954 / HTE831).